The sequence spans 206 residues: N-(5'-phosphoribosyl)anthranilate isomerase (206 aa).

It belongs to the TrpF family.

It catalyses the reaction N-(5-phospho-beta-D-ribosyl)anthranilate = 1-(2-carboxyphenylamino)-1-deoxy-D-ribulose 5-phosphate. It participates in amino-acid biosynthesis; L-tryptophan biosynthesis; L-tryptophan from chorismate: step 3/5. The sequence is that of N-(5'-phosphoribosyl)anthranilate isomerase from Pseudomonas putida (strain ATCC 47054 / DSM 6125 / CFBP 8728 / NCIMB 11950 / KT2440).